The sequence spans 395 residues: uncharacterized protein (395 aa).

Residues K182–K238 are a coiled coil.

This is an uncharacterized protein from Acanthamoeba polyphaga (Amoeba).